The chain runs to 164 residues: MD-2-related lipid-recognition protein 3 (164 aa).

The first 24 residues, 1–24, serve as a signal peptide directing secretion; that stretch reads MAMSHVQPMLLLLVSLFFLPALRG.

Interacts with RUB1/NEDD8. Neddylated. In terms of processing, ubiquitinated.

The protein localises to the vacuole. It is found in the endoplasmic reticulum. In terms of biological role, may be involved in herbivory-mediated responses. May play a role in herbivory-associated molecular pattern (HAMP) recognition. May function is jasmonate (JA) signaling in response to HAMP. May play a role in defense response against the pathogens Altenaria brassicicola and Pseudomonas syringae. The protein is MD-2-related lipid-recognition protein 3 of Arabidopsis thaliana (Mouse-ear cress).